The chain runs to 699 residues: SHC SH2 domain-binding protein 1 homolog A (699 aa).

3 PbH1 repeats span residues 480–502, 503–524, and 532–554; these read SAEL…EIYP, GSKC…LIKD, and IPKI…VLVK. Residues 603–627 are a coiled coil; that stretch reads AVEHTNNLEKDQGNLAIAKEEVECE.

The protein localises to the midbody. It localises to the cytoplasm. It is found in the cytoskeleton. Its subcellular location is the spindle. In terms of biological role, may play a role in signaling pathways governing cellular proliferation. The protein is SHC SH2 domain-binding protein 1 homolog A (shcbp1-a) of Xenopus laevis (African clawed frog).